We begin with the raw amino-acid sequence, 244 residues long: Uridylate kinase (244 aa).

Residue Lys-19–Gly-22 coordinates ATP. The segment at Gly-27–Gly-32 is involved in allosteric activation by GTP. Gly-61 contacts UMP. Gly-62 and Arg-66 together coordinate ATP. UMP contacts are provided by residues Asp-80 and Ile-141–Thr-148. ATP contacts are provided by Thr-168, Gln-169, Tyr-174, and Asp-177.

The protein belongs to the UMP kinase family. In terms of assembly, homohexamer.

It is found in the cytoplasm. It carries out the reaction UMP + ATP = UDP + ADP. It participates in pyrimidine metabolism; CTP biosynthesis via de novo pathway; UDP from UMP (UMPK route): step 1/1. Its activity is regulated as follows. Allosterically activated by GTP. Inhibited by UTP. Functionally, catalyzes the reversible phosphorylation of UMP to UDP. This is Uridylate kinase from Anaplasma phagocytophilum (strain HZ).